Consider the following 154-residue polypeptide: UPF0225 protein SG1365 (154 aa).

It belongs to the UPF0225 family.

The chain is UPF0225 protein SG1365 from Sodalis glossinidius (strain morsitans).